Here is a 191-residue protein sequence, read N- to C-terminus: 2-amino-4-hydroxy-6-hydroxymethyldihydropteridine pyrophosphokinase (191 aa).

The protein belongs to the HPPK family.

It carries out the reaction 6-hydroxymethyl-7,8-dihydropterin + ATP = (7,8-dihydropterin-6-yl)methyl diphosphate + AMP + H(+). It functions in the pathway cofactor biosynthesis; tetrahydrofolate biosynthesis; 2-amino-4-hydroxy-6-hydroxymethyl-7,8-dihydropteridine diphosphate from 7,8-dihydroneopterin triphosphate: step 4/4. Functionally, catalyzes the transfer of pyrophosphate from adenosine triphosphate (ATP) to 6-hydroxymethyl-7,8-dihydropterin, an enzymatic step in folate biosynthesis pathway. This is 2-amino-4-hydroxy-6-hydroxymethyldihydropteridine pyrophosphokinase (folK) from Mycobacterium leprae (strain TN).